Here is a 148-residue protein sequence, read N- to C-terminus: MVEWTDAERTAILGLWGKLNIDEIGPQALSRCLIVYPWTQRYFATFGNLSSPAAIMGNPKVAAHGRTVMGGLERAIKNMDNVKNTYAALSVMHSEKLHVDPDNFRLLADCITVCAAMKFGQAGFNADVQEAWQKFLAVVVSALCRQYH.

Residues 3–148 (EWTDAERTAI…VVSALCRQYH (146 aa)) enclose the Globin domain. Heme b-binding residues include His-64 and His-93.

In terms of assembly, heterotetramer of two alpha chains and two beta chains. In terms of tissue distribution, red blood cells.

Involved in oxygen transport from gills to the various peripheral tissues. This Danio rerio (Zebrafish) protein is Hemoglobin subunit beta-1 (ba1).